We begin with the raw amino-acid sequence, 313 residues long: MSAPDAGREDTRIPLVAVVGPTGTGKSELAIALARELDGEVVNADALQLYRGMDVGTAKLTPEERQGVPHHLLDVLEIHEEASVAAFQRDARRAVDEIRGRGRVPVLVGGSGLYVRAALDAIEFPGTDATVRARREEQLRERGRAALLRELAAVDPGSAERVKDDRRLVRALEVHDLTGRPFTSFMPERRYVQPTVQIGLAMDREVLNRRLAHRVDLMLERGWLEEVKALEARGLRESPTAGRALGYPQLLAVLDGSATLDEAREDTVAATRRFTKRQRTWFGADPRVHWLDAGDPNGIDGLTAGAVRLVAAQ.

Gly-20–Ser-27 contacts ATP. Thr-22–Ser-27 is a substrate binding site.

Belongs to the IPP transferase family. In terms of assembly, monomer. Mg(2+) serves as cofactor.

The catalysed reaction is adenosine(37) in tRNA + dimethylallyl diphosphate = N(6)-dimethylallyladenosine(37) in tRNA + diphosphate. Functionally, catalyzes the transfer of a dimethylallyl group onto the adenine at position 37 in tRNAs that read codons beginning with uridine, leading to the formation of N6-(dimethylallyl)adenosine (i(6)A). The polypeptide is tRNA dimethylallyltransferase (Kocuria rhizophila (strain ATCC 9341 / DSM 348 / NBRC 103217 / DC2201)).